Reading from the N-terminus, the 179-residue chain is Bifunctional protein PyrR (179 aa).

A PRPP-binding motif is present at residues 97-109 (VILIDDVLFTGRT).

Belongs to the purine/pyrimidine phosphoribosyltransferase family. PyrR subfamily.

The enzyme catalyses UMP + diphosphate = 5-phospho-alpha-D-ribose 1-diphosphate + uracil. Its function is as follows. Regulates the transcription of the pyrimidine nucleotide (pyr) operon in response to exogenous pyrimidines. In terms of biological role, also displays a weak uracil phosphoribosyltransferase activity which is not physiologically significant. The protein is Bifunctional protein PyrR of Actinobacillus pleuropneumoniae serotype 5b (strain L20).